Reading from the N-terminus, the 563-residue chain is Autotransporter BimA (563 aa).

Positions Met-1–Ser-20 are disordered. Residues Met-1–Ala-48 form the signal peptide. The segment at Ala-61–Tyr-472 is surface exposed passenger domain. The region spanning Ala-65–Val-82 is the WH2 domain. The interval Thr-96 to Glu-130 is central and acidic domains. Residues Arg-109–Thr-350 are disordered. 3 stretches are compositionally biased toward low complexity: residues Ala-138–Arg-150, Pro-162–Arg-197, and Ser-211–Arg-227. Composition is skewed to polar residues over residues Gly-228–Thr-238 and Ser-269–Thr-281. The tract at residues Thr-473 to Arg-509 is outer membrane translocation of the passenger domain. The next 4 beta stranded transmembrane spans lie at Asp-510–Gly-519, His-525–Ile-536, Arg-543–Ser-549, and Asn-553–Trp-563. A translocator domain region spans residues Asp-510 to Trp-563.

The protein belongs to the autotransporter-2 (AT-2) (TC 1.B.40) family. In terms of assembly, homotrimer. Interacts with host G-actin; the interaction is direct. Interacts (via central and acidic domains) with host ACTR2/ARP2 and ACTR3/ARP3.

It is found in the cell outer membrane. It localises to the cell surface. During host cell infection, required for actin-based intracellular motility. Mediates actin tail formation at one pole of the bacteria surface by recruiting host Arp2/3 (ACTR3/ARP3-ACTR2/ARP2) which leads to actin polymerization which provides the propulsive force for intracellular movement and intercellular dissemination of the bacterium. In Burkholderia thailandensis (strain ATCC 700388 / DSM 13276 / CCUG 48851 / CIP 106301 / E264), this protein is Autotransporter BimA.